A 1840-amino-acid chain; its full sequence is Collagen alpha-1(V) chain (1840 aa).

The N-terminal stretch at 1-30 is a signal peptide; it reads MDVHTRWKAPRPGAPLLSSPLLLLLLLLWA. One can recognise a Laminin G-like domain in the interval 72–244; the sequence is DVAYRVSKDA…DYCEHYSPDC (173 aa). A nonhelical region region spans residues 231-445; the sequence is RAAYDYCEHY…MPANQDTIYE (215 aa). Residues Y234, Y236, Y240, Y262, Y263, Y336, Y338, and Y344 each carry the sulfotyrosine modification. Disordered regions lie at residues 241–547 and 561–1576; these read SPDC…QESQ and GPAG…EVIQ. Acidic residues predominate over residues 258–268; that stretch reads NPDEYYPEGEG. Composition is skewed to low complexity over residues 335–352, 375–387, and 462–471; these read DYDY…PYED, PTST…SSNP, and IIEPGMLIEG. Residues 446–560 are interrupted collagenous region; it reads GIGGPRGEKG…ILQQARLALR (115 aa). Residues 472–487 show a composition bias toward pro residues; the sequence is PPGPEGPAGLPGPPGT. 2 stretches are compositionally biased toward low complexity: residues 508–525 and 561–572; these read LPGA…LMLP and GPAGPMGLTGRP. The segment at 561 to 1572 is triple-helical region; sequence GPAGPMGLTG…GLPGPPGPPG (1012 aa). 3 positions are modified to 4-hydroxyproline: P572, P578, and P623. A 5-hydroxylysine modification is found at K629. At P641 the chain carries 4-hydroxyproline. Position 644 is a 5-hydroxylysine (K644). P650, P656, P659, P677, and P680 each carry 4-hydroxyproline. The span at 673-688 shows a compositional bias: low complexity; it reads PRGLPGEPGPRGLLGP. 2 positions are modified to 3-hydroxyproline: P682 and P688. Pro residues predominate over residues 689-698; it reads KGPPGPPGPP. P692, P698, and P707 each carry 4-hydroxyproline. K710 carries the post-translational modification 5-hydroxylysine. 4-hydroxyproline occurs at positions 719, 722, 728, and 734. The segment covering 724–743 has biased composition (low complexity); sequence QQGNPGAQGLPGPQGAIGPP. K746 bears the 5-hydroxylysine mark. A compositionally biased stretch (low complexity) spans 749 to 758; that stretch reads LGKPGLPGMP. A 4-hydroxyproline mark is found at P752, P758, P764, P767, and P773. The residue at position 776 (K776) is a 5-hydroxylysine. P782 and P791 each carry 4-hydroxyproline. 4 positions are modified to 5-hydroxylysine: K797, K806, K809, and K812. P818 is modified (4-hydroxyproline). K821 carries the 5-hydroxylysine modification. P836 is modified (4-hydroxyproline). Residues 839 to 848 show a composition bias toward basic and acidic residues; that stretch reads RGEDGPEGPK. Residues K848 and K866 each carry the 5-hydroxylysine modification. A 4-hydroxyproline mark is found at P872, P875, and P878. K884 carries the 5-hydroxylysine modification. P890 and P893 each carry 4-hydroxyproline. K899 is subject to 5-hydroxylysine. 2 positions are modified to 4-hydroxyproline: P905 and P908. The span at 910 to 919 shows a compositional bias: low complexity; the sequence is PRGQRGPTGP. 4-hydroxyproline is present on residues P932 and P947. Composition is skewed to low complexity over residues 973 to 992 and 1001 to 1013; these read KDGL…QGKT and VGPQ…TGPM. 4-hydroxyproline occurs at positions 1019, 1022, 1025, and 1031. Residues 1090-1106 show a composition bias toward low complexity; sequence SPGERGPAGAAGPIGIP. A compositionally biased stretch (pro residues) spans 1108–1117; it reads RPGPQGPPGP. 4-hydroxyproline occurs at positions 1223 and 1226. The segment covering 1261–1270 has biased composition (low complexity); that stretch reads PSGAPGADGP. The span at 1296-1305 shows a compositional bias: gly residues; sequence GLPGEGGPLG. Pro residues-rich tracts occupy residues 1382-1400 and 1456-1471; these read TGEP…PGPA and SPGP…PPGL. 4-hydroxyproline is present on residues P1469 and P1472. Positions 1487–1496 are enriched in low complexity; it reads PGLIGLIGPP. A compositionally biased stretch (pro residues) spans 1528–1543; it reads PLGPPGPPGLPGPPGP. Positions 1544 to 1556 are enriched in low complexity; it reads KGAKGSSGPTGPK. A nonhelical region region spans residues 1573–1607; it reads EVIQPLPIQASRTRRNIDASQLLDDGAGESYVDYA. Sulfotyrosine occurs at positions 1603 and 1606. The Fibrillar collagen NC1 domain occupies 1611-1839; the sequence is EEIFGSLNSL…GFEVGPACFL (229 aa).

Belongs to the fibrillar collagen family. In terms of assembly, trimers of two alpha 1(V) and one alpha 2(V) chains in most tissues and trimers of one alpha 1(V), one alpha 2(V), and one alpha 3(V) chains in placenta. Interacts with CSPG4. In terms of processing, prolines at the third position of the tripeptide repeating unit (G-X-Y) are hydroxylated in some or all of the chains. Sulfated on 40% of tyrosines. Post-translationally, hydroxylation on proline residues within the sequence motif, GXPG, is most likely to be 4-hydroxy as this fits the requirement for 4-hydroxylation in vertebrates. A high molecular weight form was detected in Schwann cells and peripheral nerve. A lower, probably processed form, is detected in all other tissues tested (at protein level).

It localises to the secreted. The protein localises to the extracellular space. It is found in the extracellular matrix. Type V collagen is a member of group I collagen (fibrillar forming collagen). It is a minor connective tissue component of nearly ubiquitous distribution. Type V collagen binds to DNA, heparan sulfate, thrombospondin, heparin, and insulin. The chain is Collagen alpha-1(V) chain (Col5a1) from Rattus norvegicus (Rat).